The following is a 233-amino-acid chain: Peptidyl-tRNA hydrolase (233 aa).

Tyr14 contacts tRNA. The active-site Proton acceptor is the His19. Residues Phe64, Asn66, and Asn112 each contribute to the tRNA site. Positions 187-233 are disordered; that stretch reads VSPRRSGTGQKGKDKPPAPAKQQATATKAEPEPDTRSALQKLMERFK.

It belongs to the PTH family. As to quaternary structure, monomer.

It is found in the cytoplasm. The enzyme catalyses an N-acyl-L-alpha-aminoacyl-tRNA + H2O = an N-acyl-L-amino acid + a tRNA + H(+). Hydrolyzes ribosome-free peptidyl-tRNAs (with 1 or more amino acids incorporated), which drop off the ribosome during protein synthesis, or as a result of ribosome stalling. Functionally, catalyzes the release of premature peptidyl moieties from peptidyl-tRNA molecules trapped in stalled 50S ribosomal subunits, and thus maintains levels of free tRNAs and 50S ribosomes. The chain is Peptidyl-tRNA hydrolase from Roseobacter denitrificans (strain ATCC 33942 / OCh 114) (Erythrobacter sp. (strain OCh 114)).